A 527-amino-acid chain; its full sequence is Coproporphyrinogen III oxidase (527 aa).

Low complexity predominate over residues 1-14 (MSTTDRVTTPTPTV). Positions 1–23 (MSTTDRVTTPTPTVSGTDAPGPD) are disordered. Residues 33 to 38 (GGGITG), 56 to 57 (ES), lysine 64, and 78 to 81 (GPDS) contribute to the FAD site. Positions 231 to 267 (RRAARQRAAQNNAQQNSSHQNSTGQNNSAGTRGPAAS) are disordered. A compositionally biased stretch (low complexity) spans 236–252 (QRAAQNNAQQNSSHQNS). FAD contacts are provided by residues valine 300, tryptophan 448, and 487-489 (VGL).

Belongs to the protoporphyrinogen/coproporphyrinogen oxidase family. Coproporphyrinogen III oxidase subfamily. FAD is required as a cofactor.

It localises to the cytoplasm. It carries out the reaction coproporphyrinogen III + 3 O2 = coproporphyrin III + 3 H2O2. The protein operates within porphyrin-containing compound metabolism; protoheme biosynthesis. In terms of biological role, involved in coproporphyrin-dependent heme b biosynthesis. Catalyzes the oxidation of coproporphyrinogen III to coproporphyrin III. The polypeptide is Coproporphyrinogen III oxidase (Propionibacterium freudenreichii subsp. freudenreichii).